Consider the following 345-residue polypeptide: Growth hormone-inducible transmembrane protein (345 aa).

A mitochondrion-targeting transit peptide spans 1-45 (MLAARLVCLRTLPSRVFHPAFTKASPVVKNSITKNQWLLTPSREY). Residues 46–82 (ATKTRIGIRRGRTGQELKEAALEPSMEKIFKIDQMGR) lie on the Mitochondrial matrix side of the membrane. Residues 83–103 (WFVAGGAAVGLGALCYYGLGL) traverse the membrane as a helical segment. At 104-125 (SNEIGAIEKAVIWPQYVKDRIH) the chain is on the mitochondrial intermembrane side. A helical transmembrane segment spans residues 126–146 (STYMYLAGSIGLTALSAIAIS). Over 147 to 159 (RTPVLMNFMMRGS) the chain is Mitochondrial matrix. Residues 160-180 (WVTIGVTFAAMVGAGMLVRSI) form a helical membrane-spanning segment. At 181-190 (PYDQSPGPKH) the chain is on the mitochondrial intermembrane side. A helical transmembrane segment spans residues 191–211 (LAWLLHSGVMGAVVAPLTILG). Over 212–213 (GP) the chain is Mitochondrial matrix. The helical transmembrane segment at 214 to 234 (LLIRAAWYTAGIVGGLSTVAM) threads the bilayer. Topologically, residues 235 to 244 (CAPSEKFLNM) are mitochondrial intermembrane. Residues 245-265 (GAPLGVGLGLVFVSSLGSMFL) form a helical membrane-spanning segment. Over 266–271 (PPTTVA) the chain is Mitochondrial matrix. The chain crosses the membrane as a helical span at residues 272–292 (GATLYSVAMYGGLVLFSMFLL). Topologically, residues 293-345 (YDTQKVIKRAEVSPMYGVQKYDPINSMLSIYMDTLNIFMRVATMLATGGNRKK) are mitochondrial intermembrane.

The protein belongs to the BI1 family. As to quaternary structure, interacts with LETM1. Interacts with AFG3L2. In terms of processing, undergoes AFG3L2-mediated proteolytic degradation, upon hyperpolarization of mitochondria.

Its subcellular location is the mitochondrion inner membrane. It carries out the reaction Ca(2+)(in) + 2 H(+)(out) = Ca(2+)(out) + 2 H(+)(in). The enzyme catalyses K(+)(in) + H(+)(out) = K(+)(out) + H(+)(in). Functionally, plays an important role in maintenance of mitochondrial morphology and in mediating either calcium or potassium/proton antiport. Mediates proton-dependent calcium efflux from mitochondrion. Also functions as an electroneutral mitochondrial proton/potassium exchanger. Required for the mitochondrial tubular network and cristae organization. Involved in apoptotic release of cytochrome c. Inhibits the proteolytic activity of AFG3L2, stimulating respiration and stabilizing respiratory enzymes in actively respiring mitochondria. However, when mitochondria become hyperpolarized, GHITM loses its inhibitory activity toward AFG3L2 and the now the active AFG3L2 turns first on GHITM and, if hyperpolarization persists, on other proteins of the mitochondria, leading to a broad remodeling of the mitochondrial proteome. This Homo sapiens (Human) protein is Growth hormone-inducible transmembrane protein (GHITM).